The primary structure comprises 290 residues: tRNA (adenine(58)-N(1))-methyltransferase catalytic subunit TRMT61A (290 aa).

At Ser-2 the chain carries N-acetylserine. Substrate regions lie at residues 20–22 (LGH), 35–42 (QTQTRHGV), 64–65 (GW), 85–89 (QILYS), and 110–117 (SGTGSGSV). Residues Leu-87, 114-116 (SGS), Glu-135, Arg-140, 163-164 (DV), and Asp-181 contribute to the S-adenosyl-L-methionine site. 2 substrate regions span residues 180–183 (LDIP) and 205–212 (SFSPCIEQ). Substrate is bound at residue Thr-279.

This sequence belongs to the class I-like SAM-binding methyltransferase superfamily. TRM61 family. Heterotetramer; composed of two copies of TRMT6 and two copies of TRMT61A.

It is found in the nucleus. It catalyses the reaction adenosine(58) in tRNA + S-adenosyl-L-methionine = N(1)-methyladenosine(58) in tRNA + S-adenosyl-L-homocysteine + H(+). The enzyme catalyses an adenosine in mRNA + S-adenosyl-L-methionine = an N(1)-methyladenosine in mRNA + S-adenosyl-L-homocysteine + H(+). In terms of biological role, catalytic subunit of tRNA (adenine-N(1)-)-methyltransferase, which catalyzes the formation of N(1)-methyladenine at position 58 (m1A58) in initiator methionyl-tRNA. Catalytic subunit of mRNA N(1)-methyltransferase complex, which mediates methylation of adenosine residues at the N(1) position of a small subset of mRNAs: N(1) methylation takes place in tRNA T-loop-like structures of mRNAs and is only present at low stoichiometries. This is tRNA (adenine(58)-N(1))-methyltransferase catalytic subunit TRMT61A (Trmt61a) from Rattus norvegicus (Rat).